A 549-amino-acid chain; its full sequence is Neurofilament light polypeptide (549 aa).

Ser-2 is subject to N-acetylserine. Residues 2 to 92 (SSFYSEPYYS…KSIRTQEKAQ (91 aa)) form a head region. Thr-21 carries O-linked (GlcNAc) threonine glycosylation. An Asymmetric dimethylarginine; alternate modification is found at Arg-23. An Omega-N-methylarginine; alternate modification is found at Arg-23. The O-linked (GlcNAc) serine glycan is linked to Ser-27. The residue at position 30 (Arg-30) is an Omega-N-methylarginine. Tyr-43 bears the Phosphotyrosine mark. Phosphoserine is present on residues Ser-56, Ser-66, and Ser-102. One can recognise an IF rod domain in the interval 89–400 (EKAQLQDLND…KLLEGEETRL (312 aa)). The segment at 93-124 (LQDLNDRFASFIERVHELEQQNKVLEAQLLVL) is coil 1A. Residues 125–137 (RQKHSEPSRFRAL) are linker 1. A coil 1B region spans residues 138-233 (YEQEIRDLRL…KVHEEEIAEL (96 aa)). A linker 12 region spans residues 234–252 (QAQIQYAQISVEMDVSSKP). The segment at 253 to 271 (DLSAALKDIRAQYEKLAAK) is coil 2A. Positions 272 to 280 (NMQNAEEWF) are linker 2. A coil 2B region spans residues 281–396 (KSRFTVLTES…AAYRKLLEGE (116 aa)). Residues 381 to 391 (ALDIEIAAYRK) form an epitope; recognized by IF-specific monoclonal antibody region. The tract at residues 397–443 (ETRLSFTSVGSLTTGYSQSSQVFGRSAYGGLQTSSYLMSTRSFPSYY) is tail, subdomain A. A tail region spans residues 397 to 549 (ETRLSFTSVG…GEEQATKKKD (153 aa)). The tract at residues 444 to 549 (TSHVQEEQIE…GEEQATKKKD (106 aa)) is tail, subdomain B (acidic). The tract at residues 462-549 (KAEEAKDEPP…GEEQATKKKD (88 aa)) is disordered. The segment covering 471-534 (PSEGEAEEEG…ETKEAEEEEK (64 aa)) has biased composition (acidic residues). At Ser-472 the chain carries Phosphoserine. Thr-526 bears the Phosphothreonine mark. Basic and acidic residues predominate over residues 535–549 (KDEGAGEEQATKKKD).

The protein belongs to the intermediate filament family. As to quaternary structure, forms homodimers (in vitro). Forms heterodimers with NEFH or NEFM; which can further hetero-oligomerize (in vitro). Forms heterodimers with INA (in vitro). Interacts with ARHGEF28. Interacts with TRIM2. Post-translationally, O-glycosylated. Phosphorylated in the head and rod regions by the PKC kinase PKN1, leading to the inhibition of polymerization. In terms of processing, ubiquitinated in the presence of TRIM2 and UBE2D1.

It is found in the cell projection. The protein resides in the axon. It localises to the cytoplasm. Its subcellular location is the cytoskeleton. Functionally, neurofilaments usually contain three intermediate filament proteins: NEFL, NEFM, and NEFH which are involved in the maintenance of neuronal caliber. May additionally cooperate with the neuronal intermediate filament proteins PRPH and INA to form neuronal filamentous networks. The polypeptide is Neurofilament light polypeptide (NEFL) (Sus scrofa (Pig)).